Here is a 249-residue protein sequence, read N- to C-terminus: Eukaryotic translation initiation factor 3 subunit J-A (249 aa).

A compositionally biased stretch (acidic residues) spans 1 to 15; sequence MADADSWDADSFEPE. A disordered region spans residues 1–104; it reads MADADSWDAD…DTPLTPEDEL (104 aa). Residues 16 to 27 are compositionally biased toward basic and acidic residues; that stretch reads EPIKKAAVHDKW. The segment covering 28–52 has biased composition (acidic residues); the sequence is EGEDEDDDVKDNWDDDEEEEKEEEE. Residues 34–96 are a coiled coil; it reads DDVKDNWDDD…QQLEETKRDT (63 aa). Residues 53-96 are compositionally biased toward basic and acidic residues; sequence EKKTEAKPTEKKKLSEKIKEKENLQRKKQEELRKQQLEETKRDT.

It belongs to the eIF-3 subunit J family. Component of the eukaryotic translation initiation factor 3 (eIF-3) complex, which is composed of 13 subunits: eif3a, eif3b, eif3c, eif3d, eif3e, eif3f, eif3g, eif3h, eif3i, eif3j, eif3k, eif3l and eif3m.

The protein localises to the cytoplasm. In terms of biological role, component of the eukaryotic translation initiation factor 3 (eIF-3) complex, which is involved in protein synthesis of a specialized repertoire of mRNAs and, together with other initiation factors, stimulates binding of mRNA and methionyl-tRNAi to the 40S ribosome. The eIF-3 complex specifically targets and initiates translation of a subset of mRNAs involved in cell proliferation. In Danio rerio (Zebrafish), this protein is Eukaryotic translation initiation factor 3 subunit J-A (eif3ja).